The primary structure comprises 364 residues: Aminomethyltransferase (364 aa).

This sequence belongs to the GcvT family. As to quaternary structure, the glycine cleavage system is composed of four proteins: P, T, L and H.

The enzyme catalyses N(6)-[(R)-S(8)-aminomethyldihydrolipoyl]-L-lysyl-[protein] + (6S)-5,6,7,8-tetrahydrofolate = N(6)-[(R)-dihydrolipoyl]-L-lysyl-[protein] + (6R)-5,10-methylene-5,6,7,8-tetrahydrofolate + NH4(+). The glycine cleavage system catalyzes the degradation of glycine. The polypeptide is Aminomethyltransferase (Shigella sonnei (strain Ss046)).